Reading from the N-terminus, the 164-residue chain is SsrA-binding protein (164 aa).

Belongs to the SmpB family.

It localises to the cytoplasm. In terms of biological role, required for rescue of stalled ribosomes mediated by trans-translation. Binds to transfer-messenger RNA (tmRNA), required for stable association of tmRNA with ribosomes. tmRNA and SmpB together mimic tRNA shape, replacing the anticodon stem-loop with SmpB. tmRNA is encoded by the ssrA gene; the 2 termini fold to resemble tRNA(Ala) and it encodes a 'tag peptide', a short internal open reading frame. During trans-translation Ala-aminoacylated tmRNA acts like a tRNA, entering the A-site of stalled ribosomes, displacing the stalled mRNA. The ribosome then switches to translate the ORF on the tmRNA; the nascent peptide is terminated with the 'tag peptide' encoded by the tmRNA and targeted for degradation. The ribosome is freed to recommence translation, which seems to be the essential function of trans-translation. The chain is SsrA-binding protein from Gluconobacter oxydans (strain 621H) (Gluconobacter suboxydans).